We begin with the raw amino-acid sequence, 361 residues long: UDP-N-acetylglucosamine--N-acetylmuramyl-(pentapeptide) pyrophosphoryl-undecaprenol N-acetylglucosamine transferase (361 aa).

UDP-N-acetyl-alpha-D-glucosamine-binding positions include 21 to 23 (TGG), asparagine 131, arginine 172, serine 195, isoleucine 250, and glutamine 295.

The protein belongs to the glycosyltransferase 28 family. MurG subfamily.

The protein localises to the cell inner membrane. The enzyme catalyses di-trans,octa-cis-undecaprenyl diphospho-N-acetyl-alpha-D-muramoyl-L-alanyl-D-glutamyl-meso-2,6-diaminopimeloyl-D-alanyl-D-alanine + UDP-N-acetyl-alpha-D-glucosamine = di-trans,octa-cis-undecaprenyl diphospho-[N-acetyl-alpha-D-glucosaminyl-(1-&gt;4)]-N-acetyl-alpha-D-muramoyl-L-alanyl-D-glutamyl-meso-2,6-diaminopimeloyl-D-alanyl-D-alanine + UDP + H(+). It functions in the pathway cell wall biogenesis; peptidoglycan biosynthesis. Functionally, cell wall formation. Catalyzes the transfer of a GlcNAc subunit on undecaprenyl-pyrophosphoryl-MurNAc-pentapeptide (lipid intermediate I) to form undecaprenyl-pyrophosphoryl-MurNAc-(pentapeptide)GlcNAc (lipid intermediate II). This is UDP-N-acetylglucosamine--N-acetylmuramyl-(pentapeptide) pyrophosphoryl-undecaprenol N-acetylglucosamine transferase from Solibacter usitatus (strain Ellin6076).